The following is a 337-amino-acid chain: Ribose-phosphate pyrophosphokinase 4 (337 aa).

At Ser2 the chain carries N-acetylserine. Residues Asp158 and His160 each coordinate Mg(2+). A binding of phosphoribosylpyrophosphate region spans residues 241–256 (GCHVVIVDDLVQSGGT).

Belongs to the ribose-phosphate pyrophosphokinase family.

It catalyses the reaction D-ribose 5-phosphate + ATP = 5-phospho-alpha-D-ribose 1-diphosphate + AMP + H(+). The protein is Ribose-phosphate pyrophosphokinase 4 (PRS4) of Arabidopsis thaliana (Mouse-ear cress).